Consider the following 318-residue polypeptide: MAGALRGPGDADWRAEIERRVRGEVLRDAPLAPRTAVRVGGPADLLVRPADPGALAALLRAVRELSVPLTILGGGANTLVADAGVRGVVLRLPQGFGEEARDGERLVLGAGAPTSRLWVRAHAAGLVGIEFVAGIPGTLGGAVAMNAGTKIGEMKDVVSAVELATADGAGFVPAASLGFAYRTCRLPAGAVITRVQLTLRPGDVAESERIMQADRDGRRRTQPLDRPTFGSTFTNPPGDFAGRLVEAVGLKGHRVGGATWSDVHANFVSNLGGATARDVLALMRLARTRVKQRFGISLETEVRLVGEFHAEDLEGLRA.

Residues 39 to 202 form the FAD-binding PCMH-type domain; that stretch reads VGGPADLLVR…TRVQLTLRPG (164 aa). Residue arginine 182 is part of the active site. The segment covering 214 to 223 has biased composition (basic and acidic residues); the sequence is DRDGRRRTQP. Positions 214–235 are disordered; that stretch reads DRDGRRRTQPLDRPTFGSTFTN. The active-site Proton donor is the serine 231. Glutamate 301 is an active-site residue.

Belongs to the MurB family. Requires FAD as cofactor.

Its subcellular location is the cytoplasm. It carries out the reaction UDP-N-acetyl-alpha-D-muramate + NADP(+) = UDP-N-acetyl-3-O-(1-carboxyvinyl)-alpha-D-glucosamine + NADPH + H(+). It functions in the pathway cell wall biogenesis; peptidoglycan biosynthesis. In terms of biological role, cell wall formation. The polypeptide is UDP-N-acetylenolpyruvoylglucosamine reductase (Anaeromyxobacter sp. (strain Fw109-5)).